The chain runs to 314 residues: Carbamate kinase (314 aa).

This sequence belongs to the carbamate kinase family.

It is found in the cytoplasm. It carries out the reaction hydrogencarbonate + NH4(+) + ATP = carbamoyl phosphate + ADP + H2O + H(+). Its pathway is metabolic intermediate metabolism; carbamoyl phosphate degradation; CO(2) and NH(3) from carbamoyl phosphate: step 1/1. This is Carbamate kinase (arcC) from Latilactobacillus sakei (Lactobacillus sakei).